We begin with the raw amino-acid sequence, 546 residues long: MGNTVHRTLPDSSPPARLLATRPCYGPGPERRAVLGEAPRFHAQAKGKNVRLDGHSRRATRRNSFCNGVTFTQRPIRLYEQVRLRLVAVRPGWSGALRFGFTAHDPSLMSAQDIPKYACPDLVTRPGYWAKALPENLALRDTVLAYWADRHGRVFYSVNDGEPVLFHCGVAVGGPLWALIDVYGITDEVQLLESTFADTLTPLRLGQARLSACPPPGSHDAANFDNNELENNQVVAKLGHLALGRPDAAVPCVARERPRPASSPALLDAELRFHATRGPDVSLSADRRLACAPRPDGGRTLVFSERPLRPGESLCVEVGRPGLAAPAAVAFGITSCDPGALRPSELPADPAALLDRKEYWVVARAGPVPSGGDALSFTLRPGGDVLLAVNGRPRGRLLCVDTSQALWAFFAVRGGVAGQLRLLGTLQSSSETMTPSGSFSGSQDDSDSDMTFGVNQSSSASESSLVTAPSSPLSPPVSPAFSAPEPTGSRNGECTVCFDSEVDTVIYTCGHMCLCHGCGLRLRRQARACCPICRRPIKDVIKIYRP.

An NHR 1 domain is found at 38–194; the sequence is APRFHAQAKG…ITDEVQLLES (157 aa). Phosphothreonine is present on T199. The NHR 2 domain maps to 270-424; it reads ELRFHATRGP…GVAGQLRLLG (155 aa). Residues 429–490 form a disordered region; the sequence is SSETMTPSGS…FSAPEPTGSR (62 aa). Positions 457–471 are enriched in low complexity; sequence SSSASESSLVTAPSS. Residues 494 to 534 form an RING-type zinc finger; the sequence is CTVCFDSEVDTVIYTCGHMCLCHGCGLRLRRQARACCPICR.

As to quaternary structure, interacts with DLL1 and DLL4. In terms of tissue distribution, expressed in the limb buds and dorsal root ganglia. Expressed in brain and kidney and at low levels in the heart.

The protein resides in the cytoplasm. The enzyme catalyses S-ubiquitinyl-[E2 ubiquitin-conjugating enzyme]-L-cysteine + [acceptor protein]-L-lysine = [E2 ubiquitin-conjugating enzyme]-L-cysteine + N(6)-ubiquitinyl-[acceptor protein]-L-lysine.. The protein operates within protein modification; protein ubiquitination. Functionally, E3 ubiquitin-protein ligase involved in regulation of the Notch pathway through influencing the stability and activity of several Notch ligands. The sequence is that of E3 ubiquitin-protein ligase NEURL1B (Neurl1b) from Mus musculus (Mouse).